The primary structure comprises 194 residues: MLQPKQTSWVILAGGQARRMGGKDKGFVLFQDKALIEHALDTLTSQTDQIAINANRSIEEYSRYAVTFPDQFSEYPGPLAGMHSGLVNMNSDWVGFIPCDSPNLPNNLVSLLCNAVKEDTDIVVAHDGEYMQPVVTLMHKRIIPKIDAFLTRGDRKIILLYKECNTVFADFSDYPNAFINLNSPQELEQFGTLL.

GTP-binding positions include 12 to 14, Lys25, Asn53, Asp70, and Asp100; that span reads LAG. Residue Asp100 coordinates Mg(2+).

The protein belongs to the MobA family. As to quaternary structure, monomer. The cofactor is Mg(2+).

Its subcellular location is the cytoplasm. It catalyses the reaction Mo-molybdopterin + GTP + H(+) = Mo-molybdopterin guanine dinucleotide + diphosphate. Transfers a GMP moiety from GTP to Mo-molybdopterin (Mo-MPT) cofactor (Moco or molybdenum cofactor) to form Mo-molybdopterin guanine dinucleotide (Mo-MGD) cofactor. The polypeptide is Molybdenum cofactor guanylyltransferase (Aliivibrio fischeri (strain ATCC 700601 / ES114) (Vibrio fischeri)).